The following is a 128-amino-acid chain: CD59 glycoprotein (128 aa).

Positions Met1–Ser25 are cleaved as a signal peptide. Residues Leu26–Ser108 enclose the UPAR/Ly6 domain. Cystine bridges form between Cys28/Cys51, Cys31/Cys38, Cys44/Cys64, Cys70/Cys88, and Cys89/Cys94. An N-linked (GlcNAc...) asparagine glycan is attached at Asn43. Asn102 carries the GPI-anchor amidated asparagine lipid modification. The propeptide at Gly103–Pro128 is removed in mature form.

In terms of assembly, interacts with T-cell surface antigen CD2. In terms of processing, N- and O-glycosylated.

The protein localises to the cell membrane. It is found in the secreted. In terms of biological role, potent inhibitor of the complement membrane attack complex (MAC) action, which protects self-cells from damage during complement activation. Acts by binding to the beta-haipins of C8 (C8A and C8B) components of the assembling MAC, forming an intermolecular beta-sheet that prevents incorporation of the multiple copies of C9 required for complete formation of the osmolytic pore. This Callithrix sp. (Marmoset) protein is CD59 glycoprotein.